Consider the following 544-residue polypeptide: Probable protein kinase UbiB (544 aa).

Residues 123-501 (DFDIKPLASA…KRQQAKGQFL (379 aa)) enclose the Protein kinase domain. Residues 129–137 (LASASIAQV) and Lys-152 each bind ATP. Asp-287 acts as the Proton acceptor in catalysis. A helical transmembrane segment spans residues 515–537 (LLTSNITVLASISAATGAAFWLF).

It belongs to the ABC1 family. UbiB subfamily.

The protein localises to the cell inner membrane. The protein operates within cofactor biosynthesis; ubiquinone biosynthesis [regulation]. Is probably a protein kinase regulator of UbiI activity which is involved in aerobic coenzyme Q (ubiquinone) biosynthesis. The chain is Probable protein kinase UbiB from Aliivibrio fischeri (strain MJ11) (Vibrio fischeri).